Consider the following 350-residue polypeptide: Phenylalanine--tRNA ligase alpha subunit (350 aa).

Residue Glu-257 coordinates Mg(2+).

This sequence belongs to the class-II aminoacyl-tRNA synthetase family. Phe-tRNA synthetase alpha subunit type 1 subfamily. As to quaternary structure, tetramer of two alpha and two beta subunits. The cofactor is Mg(2+).

It is found in the cytoplasm. It carries out the reaction tRNA(Phe) + L-phenylalanine + ATP = L-phenylalanyl-tRNA(Phe) + AMP + diphosphate + H(+). The polypeptide is Phenylalanine--tRNA ligase alpha subunit (Listeria welshimeri serovar 6b (strain ATCC 35897 / DSM 20650 / CCUG 15529 / CIP 8149 / NCTC 11857 / SLCC 5334 / V8)).